We begin with the raw amino-acid sequence, 461 residues long: PE-PGRS family protein PE_PGRS45 (461 aa).

A PE domain is found at 4-92; the sequence is VNVAPQLVST…GSTYAVAEAA (89 aa). Disordered stretches follow at residues 232–251 and 426–461; these read GGAG…GGNG and AGSL…GADG. A compositionally biased stretch (gly residues) spans 434–446; the sequence is PGFGGPGGSGGAS.

The protein belongs to the mycobacterial PE family. PGRS subfamily. In terms of assembly, interacts with human TIMM23, which is part of a complex that mediates the translocation of transit peptide-containing proteins across the mitochondrial inner membrane.

It is found in the cell membrane. The protein localises to the secreted. Its subcellular location is the cell wall. The protein resides in the host mitochondrion. It catalyses the reaction hexadecanal + NADP(+) + CoA = hexadecanoyl-CoA + NADPH + H(+). With respect to regulation, oxidoreductase activity is inhibited by the first line anti-tubercular drug isoniazid (INH). In terms of biological role, may be an effector protein that contributes to pathogenesis by targeting host mitochondria, where it modulates host cellular processes. In THP1 macrophages, increases the ADP-to-ATP ratio and increases the cellular ROS levels. Also induces mitochondrial perturbations through membrane depolarization, release of mitochondrial superoxide, up-regulation of expression of host proapoptotic proteins (BAX and BIM) and release of cytochrome C into the cytosol. May bind calcium to increase intracellular calcium influx, which may further lead to mitochondrial perturbations. Mitochondrial perturbations and alteration of Ca(2+) influx are independent but simultaneous events. Its function is as follows. In vitro, shows NADPH-dependent fatty acyl coenzyme A oxidoreductase activity. Can oxidize palmitoyl-CoA, but not glutathione and thiourea. This is PE-PGRS family protein PE_PGRS45 from Mycobacterium tuberculosis (strain ATCC 25618 / H37Rv).